Reading from the N-terminus, the 148-residue chain is 3-hydroxyacyl-[acyl-carrier-protein] dehydratase FabZ (148 aa).

Histidine 48 is an active-site residue.

It belongs to the thioester dehydratase family. FabZ subfamily.

It localises to the cytoplasm. It carries out the reaction a (3R)-hydroxyacyl-[ACP] = a (2E)-enoyl-[ACP] + H2O. Involved in unsaturated fatty acids biosynthesis. Catalyzes the dehydration of short chain beta-hydroxyacyl-ACPs and long chain saturated and unsaturated beta-hydroxyacyl-ACPs. The chain is 3-hydroxyacyl-[acyl-carrier-protein] dehydratase FabZ from Nitratiruptor sp. (strain SB155-2).